A 494-amino-acid chain; its full sequence is PTS system cellobiose-specific EIIC component (494 aa).

A PTS EIIC type-3 domain is found at 8-481 (MEKYLVPVAA…IITFVIWVPF (474 aa)). Helical transmembrane passes span 32–52 (FIGM…SAIV), 92–112 (ISAL…AFSW), 119–139 (AYGV…FAGL), 188–208 (AYFT…KLML), 227–247 (FLAI…YYII), 274–294 (IFSV…GLHG), 355–375 (AFAW…IILF), 406–426 (VVLN…SVII), and 463–483 (AIVL…PFVI).

The protein resides in the cell membrane. Functionally, the phosphoenolpyruvate-dependent sugar phosphotransferase system (PTS), a major carbohydrate active transport system, catalyzes the phosphorylation of incoming sugar substrates concomitant with their translocation across the cell membrane. Involved in cellobiose transport with PtcA and PtcB. This system can also transport lactose. This chain is PTS system cellobiose-specific EIIC component, found in Lactococcus lactis subsp. lactis (strain IL1403) (Streptococcus lactis).